A 420-amino-acid polypeptide reads, in one-letter code: MKTLIARHKAGEHIGICSVCSAHPLVIEAALAFDRNSTRKVLIEATSNQVNQFGGYTGMTPADFREFVFAIADKVGFARERIILGGDHLGPNCWQQENADAAMEKSVELVKAYVRAGFSKIHLDASMSCADDSIPLAPETVAERAAVLCLAAESVATDCQREQLNYVIGTEVPVPGGEASAIQSVHITQVEDAANTLRTHQKAFIARGLAEALTRVIAIVVQPGVEFDHSNIIHYQAQEAQALAQWIEKTKMVYEAHSTDYQTQTAYRELVRDHFAILKVGPALTFALREAIFALAQIEQELIAPENRSRCLAVIEEVMLDEPQYWKKYYRTGFNDSLLGIRYSLSDRIRYYWPHSRIKNSVETMMVNLEGVDIPLGMISQYLPKQFERIQSGELSAIPHQLIMDKIYDVLRAYRYGCAE.

It belongs to the GatZ/KbaZ family. GatZ subfamily. As to quaternary structure, forms a complex with GatY.

Its pathway is carbohydrate metabolism; D-tagatose 6-phosphate degradation; D-glyceraldehyde 3-phosphate and glycerone phosphate from D-tagatose 6-phosphate: step 2/2. Its function is as follows. Component of the tagatose-1,6-bisphosphate aldolase GatYZ that is required for full activity and stability of the Y subunit. Could have a chaperone-like function for the proper and stable folding of GatY. When expressed alone, GatZ does not show any aldolase activity. Is involved in the catabolism of galactitol. This chain is D-tagatose-1,6-bisphosphate aldolase subunit GatZ, found in Escherichia coli O45:K1 (strain S88 / ExPEC).